The sequence spans 336 residues: Phospho-N-acetylmuramoyl-pentapeptide-transferase (336 aa).

10 helical membrane passes run 3 to 23 (LTLIAAIISFMVSAFTMPYFI), 53 to 73 (GGTVFLLVATAVSLLVSLFSI), 78 to 98 (SLALISGILSIVVIYGIIGFL), 118 to 138 (LALQLAGGLMFYFLHVSPSGI), 143 to 163 (VFGYQLSLGIFYLFFVLFWVV), 174 to 194 (GIDGLASISVVISLVTYGVIA), 200 to 220 (FDVLLLIGAMIGALLGFFCFN), 226 to 246 (VFMGDVGSLALGAMLAAISIA), 251 to 271 (WTLLIIGIVYVLETSSVMLQV), and 316 to 336 (AFLWGVGSLASLLVLAILYVF).

Belongs to the glycosyltransferase 4 family. MraY subfamily. The cofactor is Mg(2+).

It is found in the cell membrane. The enzyme catalyses UDP-N-acetyl-alpha-D-muramoyl-L-alanyl-gamma-D-glutamyl-L-lysyl-D-alanyl-D-alanine + di-trans,octa-cis-undecaprenyl phosphate = Mur2Ac(oyl-L-Ala-gamma-D-Glu-L-Lys-D-Ala-D-Ala)-di-trans,octa-cis-undecaprenyl diphosphate + UMP. The protein operates within cell wall biogenesis; peptidoglycan biosynthesis. In terms of biological role, catalyzes the initial step of the lipid cycle reactions in the biosynthesis of the cell wall peptidoglycan: transfers peptidoglycan precursor phospho-MurNAc-pentapeptide from UDP-MurNAc-pentapeptide onto the lipid carrier undecaprenyl phosphate, yielding undecaprenyl-pyrophosphoryl-MurNAc-pentapeptide, known as lipid I. The chain is Phospho-N-acetylmuramoyl-pentapeptide-transferase from Streptococcus pyogenes serotype M3 (strain ATCC BAA-595 / MGAS315).